A 129-amino-acid polypeptide reads, in one-letter code: S-adenosylmethionine decarboxylase proenzyme (129 aa).

The active-site Schiff-base intermediate with substrate; via pyruvic acid is Ser63. Position 63 is a pyruvic acid (Ser); by autocatalysis (Ser63). His68 (proton acceptor; for processing activity) is an active-site residue. The active-site Proton donor; for catalytic activity is the Cys83.

Belongs to the prokaryotic AdoMetDC family. Type 1 subfamily. Heterotetramer of two alpha and two beta chains arranged as a dimer of alpha/beta heterodimers. Pyruvate serves as cofactor. Is synthesized initially as an inactive proenzyme. Formation of the active enzyme involves a self-maturation process in which the active site pyruvoyl group is generated from an internal serine residue via an autocatalytic post-translational modification. Two non-identical subunits are generated from the proenzyme in this reaction, and the pyruvate is formed at the N-terminus of the alpha chain, which is derived from the carboxyl end of the proenzyme. The post-translation cleavage follows an unusual pathway, termed non-hydrolytic serinolysis, in which the side chain hydroxyl group of the serine supplies its oxygen atom to form the C-terminus of the beta chain, while the remainder of the serine residue undergoes an oxidative deamination to produce ammonia and the pyruvoyl group blocking the N-terminus of the alpha chain.

It carries out the reaction S-adenosyl-L-methionine + H(+) = S-adenosyl 3-(methylsulfanyl)propylamine + CO2. Its pathway is amine and polyamine biosynthesis; S-adenosylmethioninamine biosynthesis; S-adenosylmethioninamine from S-adenosyl-L-methionine: step 1/1. In terms of biological role, catalyzes the decarboxylation of S-adenosylmethionine to S-adenosylmethioninamine (dcAdoMet), the propylamine donor required for the synthesis of the polyamines spermine and spermidine from the diamine putrescine. In Shouchella clausii (strain KSM-K16) (Alkalihalobacillus clausii), this protein is S-adenosylmethionine decarboxylase proenzyme.